The sequence spans 453 residues: Mitochondrial import inner membrane translocase subunit TIM44 (453 aa).

Thr129 bears the Phosphothreonine mark. Residue 167-174 coordinates ATP; it reads GGEKLGKT. An N6-succinyllysine modification is found at Lys178. Position 181 is a phosphoserine (Ser181). At Lys218 the chain carries N6-succinyllysine.

Belongs to the Tim44 family. Probable component of the PAM complex at least composed of a mitochondrial HSP70 protein, GRPEL1 or GRPEL2, TIMM44, TIMM16/PAM16 and TIMM14/DNAJC19. The complex interacts with the TIMM23 component of the TIM23 complex. Interacts with SLC25A4/ANT1 and SLC25A5/ANT2; leading to inhibit the presequence translocase TIMM23, thereby promoting stabilization of PINK1.

The protein localises to the mitochondrion inner membrane. Its subcellular location is the mitochondrion matrix. In terms of biological role, essential component of the PAM complex, a complex required for the translocation of transit peptide-containing proteins from the inner membrane into the mitochondrial matrix in an ATP-dependent manner. Recruits mitochondrial HSP70 to drive protein translocation into the matrix using ATP as an energy source. The polypeptide is Mitochondrial import inner membrane translocase subunit TIM44 (Timm44) (Rattus norvegicus (Rat)).